The sequence spans 140 residues: Large ribosomal subunit protein uL14 (140 aa).

It belongs to the universal ribosomal protein uL14 family.

The polypeptide is Large ribosomal subunit protein uL14 (RpL23-A) (Aedes aegypti (Yellowfever mosquito)).